A 361-amino-acid polypeptide reads, in one-letter code: tRNA-specific 2-thiouridylase MnmA (361 aa).

ATP-binding positions include Ala-6 to Ser-13 and Leu-32. Cys-101 acts as the Nucleophile in catalysis. Cys-101 and Cys-194 are disulfide-bonded. Gly-125 is a binding site for ATP. The tract at residues Lys-144–Gln-146 is interaction with tRNA. Cys-194 functions as the Cysteine persulfide intermediate in the catalytic mechanism.

This sequence belongs to the MnmA/TRMU family.

It is found in the cytoplasm. It carries out the reaction S-sulfanyl-L-cysteinyl-[protein] + uridine(34) in tRNA + AH2 + ATP = 2-thiouridine(34) in tRNA + L-cysteinyl-[protein] + A + AMP + diphosphate + H(+). Catalyzes the 2-thiolation of uridine at the wobble position (U34) of tRNA, leading to the formation of s(2)U34. This is tRNA-specific 2-thiouridylase MnmA from Corynebacterium aurimucosum (strain ATCC 700975 / DSM 44827 / CIP 107346 / CN-1) (Corynebacterium nigricans).